Reading from the N-terminus, the 533-residue chain is Apolipoprotein N-acyltransferase (533 aa).

The next 5 membrane-spanning stretches (helical) occupy residues 17 to 37 (FFLP…WPAV), 72 to 92 (LLFC…GGIL), 116 to 136 (GFRS…WAYM), 165 to 185 (GVWG…LLFM), and 190 to 210 (FQVK…PLLY). A CN hydrolase domain is found at 232-499 (VQPDIDPHEK…QSVLTADVPL (268 aa)). The active-site Proton acceptor is Glu274. Residue Lys352 is part of the active site. Residue Cys410 is the Nucleophile of the active site. The helical transmembrane segment at 510–530 (PDLVPHVCLGIAGVLALVAAV) threads the bilayer.

Belongs to the CN hydrolase family. Apolipoprotein N-acyltransferase subfamily.

The protein localises to the cell inner membrane. The catalysed reaction is N-terminal S-1,2-diacyl-sn-glyceryl-L-cysteinyl-[lipoprotein] + a glycerophospholipid = N-acyl-S-1,2-diacyl-sn-glyceryl-L-cysteinyl-[lipoprotein] + a 2-acyl-sn-glycero-3-phospholipid + H(+). Its pathway is protein modification; lipoprotein biosynthesis (N-acyl transfer). Catalyzes the phospholipid dependent N-acylation of the N-terminal cysteine of apolipoprotein, the last step in lipoprotein maturation. This chain is Apolipoprotein N-acyltransferase, found in Chlorobaculum tepidum (strain ATCC 49652 / DSM 12025 / NBRC 103806 / TLS) (Chlorobium tepidum).